The primary structure comprises 91 residues: Small ribosomal subunit protein uS19 (91 aa).

It belongs to the universal ribosomal protein uS19 family.

Its function is as follows. Protein S19 forms a complex with S13 that binds strongly to the 16S ribosomal RNA. The sequence is that of Small ribosomal subunit protein uS19 from Janthinobacterium sp. (strain Marseille) (Minibacterium massiliensis).